Reading from the N-terminus, the 111-residue chain is Large ribosomal subunit protein uL22 (111 aa).

Belongs to the universal ribosomal protein uL22 family. Part of the 50S ribosomal subunit.

This protein binds specifically to 23S rRNA; its binding is stimulated by other ribosomal proteins, e.g. L4, L17, and L20. It is important during the early stages of 50S assembly. It makes multiple contacts with different domains of the 23S rRNA in the assembled 50S subunit and ribosome. Its function is as follows. The globular domain of the protein is located near the polypeptide exit tunnel on the outside of the subunit, while an extended beta-hairpin is found that lines the wall of the exit tunnel in the center of the 70S ribosome. In Chlamydia trachomatis serovar L2b (strain UCH-1/proctitis), this protein is Large ribosomal subunit protein uL22.